The primary structure comprises 205 residues: Adenylyl-sulfate kinase (205 aa).

31-38 (GLSGAGKS) is a binding site for ATP. S105 functions as the Phosphoserine intermediate in the catalytic mechanism.

This sequence belongs to the APS kinase family.

The enzyme catalyses adenosine 5'-phosphosulfate + ATP = 3'-phosphoadenylyl sulfate + ADP + H(+). The protein operates within sulfur metabolism; hydrogen sulfide biosynthesis; sulfite from sulfate: step 2/3. Its function is as follows. Catalyzes the synthesis of activated sulfate. The sequence is that of Adenylyl-sulfate kinase from Shewanella sp. (strain MR-7).